We begin with the raw amino-acid sequence, 316 residues long: Aquaglyceroporin-2 (316 aa).

Residues 1–31 form a disordered region; that stretch reads MADERGPINKSGPSSTYGATENNGESGGTRG. Over 1 to 59 the chain is Cytoplasmic; that stretch reads MADERGPINKSGPSSTYGATENNGESGGTRGAPATEDVIVIQDSGWYYIKFRFKEPFAE. Over residues 11–24 the composition is skewed to polar residues; the sequence is SGPSSTYGATENNG. The helical transmembrane segment at 60–80 threads the bilayer; the sequence is FLGTFILVAFGVGAIAQTVLS. The Extracellular segment spans residues 81–86; sequence KGATGN. A helical membrane pass occupies residues 87–107; sequence WITIALGFGLGLALGIAVSGH. Topologically, residues 108–131 are cytoplasmic; that stretch reads YSGGHLNPAVTITLAIYRKFPWVK. The short motif at 114 to 116 is the NPA 1 element; it reads NPA. Residues 132-152 traverse the membrane as a helical segment; the sequence is VPVYITAQVLGAFVAAAVIYL. The Extracellular portion of the chain corresponds to 153-187; sequence NYLPAIYNFAGDKRDVIGANATAGIFATYPQPFMS. Asparagine 172 carries an N-linked (GlcNAc...) asparagine glycan. A helical membrane pass occupies residues 188-208; the sequence is IGGAFFSEALGTFFLLFVILA. The Cytoplasmic portion of the chain corresponds to 209 to 219; it reads MTDERNVPTTR. The chain crosses the membrane as a helical span at residues 220-240; sequence IVAPITIGLTLTAIAISLGFE. Topologically, residues 241–271 are extracellular; the sequence is TGFSLNAARDFGPRLFTFFIGYGVEVFTAYK. The short motif at 246-248 is the NPA 2 element; sequence NAA. Residues 272 to 292 form a helical membrane-spanning segment; it reads FYFWIPLVAPIVGGLVAGFVY. Residues 293-316 are Cytoplasmic-facing; it reads DSLLYWGEKSFLNKNVHHEHRAVA.

Belongs to the MIP/aquaporin (TC 1.A.8) family.

It localises to the cell membrane. It is found in the membrane. It catalyses the reaction H2O(in) = H2O(out). It carries out the reaction glycerol(in) = glycerol(out). With respect to regulation, polyethylene glycol (PEG) stimulates whereas glycerol inhibits the aquaporin activity. Its function is as follows. Water channel required to facilitate the transport of water across membranes. Stimulates plant drought tolerance by facilitating the transport of water from the arbuscular mycorrhiza fungus to host plants. The polypeptide is Aquaglyceroporin-2 (Rhizophagus irregularis (Arbuscular mycorrhizal fungus)).